The following is a 205-amino-acid chain: Mediator of RNA polymerase II transcription subunit 29 (205 aa).

Positions methionine 1 to glutamine 27 are enriched in low complexity. The tract at residues methionine 1–leucine 65 is disordered. The segment covering proline 28–valine 38 has biased composition (pro residues). Residues proline 39–glutamine 61 show a composition bias toward low complexity.

The protein belongs to the Mediator complex subunit 29 family. In terms of assembly, component of the Mediator complex.

The protein localises to the nucleus. Component of the Mediator complex, a coactivator involved in the regulated transcription of nearly all RNA polymerase II-dependent genes. Mediator functions as a bridge to convey information from gene-specific regulatory proteins to the basal RNA polymerase II transcription machinery. Mediator is recruited to promoters by direct interactions with regulatory proteins and serves as a scaffold for the assembly of a functional preinitiation complex with RNA polymerase II and the general transcription factors. This is Mediator of RNA polymerase II transcription subunit 29 (ix) from Drosophila virilis (Fruit fly).